A 296-amino-acid polypeptide reads, in one-letter code: 4-hydroxybenzoate octaprenyltransferase (296 aa).

Transmembrane regions (helical) follow at residues 29 to 49 (IGIYLLLWPTLWSLWIAADGV), 55 to 75 (LLIFVLGVILMRAAGCVINDF), 102 to 122 (AWITFAVLVALSFGLVLLTNA), 146 to 166 (YYPQVVLGAAYSWGILMAFTA), 169 to 189 (GELPASAWLLFLANVLWTVAY), 219 to 239 (LIIGSLQGLTLLLLALAGSRF), 241 to 261 (LGLYFYLGLAVAAACFVWEAW), and 275 to 295 (FLHNHWAGLAIFLGTVADYAL).

The protein belongs to the UbiA prenyltransferase family. It depends on Mg(2+) as a cofactor.

The protein resides in the cell inner membrane. It catalyses the reaction all-trans-octaprenyl diphosphate + 4-hydroxybenzoate = 4-hydroxy-3-(all-trans-octaprenyl)benzoate + diphosphate. It participates in cofactor biosynthesis; ubiquinone biosynthesis. Its function is as follows. Catalyzes the prenylation of para-hydroxybenzoate (PHB) with an all-trans polyprenyl group. Mediates the second step in the final reaction sequence of ubiquinone-8 (UQ-8) biosynthesis, which is the condensation of the polyisoprenoid side chain with PHB, generating the first membrane-bound Q intermediate 3-octaprenyl-4-hydroxybenzoate. This Pseudomonas aeruginosa (strain UCBPP-PA14) protein is 4-hydroxybenzoate octaprenyltransferase.